Here is a 500-residue protein sequence, read N- to C-terminus: NAD(P)H-quinone oxidoreductase chain 4, chloroplastic (500 aa).

The next 14 membrane-spanning stretches (helical) occupy residues 4 to 24, 35 to 55, 87 to 107, 111 to 131, 134 to 154, 167 to 187, 211 to 231, 242 to 262, 274 to 294, 313 to 333, 334 to 354, 386 to 406, 417 to 437, and 462 to 482; these read FPWLTILVVLPIFAGSLIFFL, YTIAICLLEFLIMTYAFCYHF, LGSILLTGFITTLATLAAWPV, SQLFYFLMLAMYSGQIGLFSS, LLLFFIMWELELIPVYLLLSM, FILYTAGGSIFFLIGVLGMGL, ILLYFGFLIAYAVKLPIIPLH, HYSTCMLLAGILLKMGAYGLI, YLFSPWLVIIGAVQIIYAALT, MGFIIIGIGSITNIGLNGAIL, QILSHGFIGATLFFLAGTACD, LALPGMSGFVAELVVFFGLIT, LITFVMAIGMILTPIYLLSML, and LFLLICIFLPVIGIGIYPDFV.

This sequence belongs to the complex I subunit 4 family.

The protein resides in the plastid. The protein localises to the chloroplast thylakoid membrane. The catalysed reaction is a plastoquinone + NADH + (n+1) H(+)(in) = a plastoquinol + NAD(+) + n H(+)(out). It catalyses the reaction a plastoquinone + NADPH + (n+1) H(+)(in) = a plastoquinol + NADP(+) + n H(+)(out). The protein is NAD(P)H-quinone oxidoreductase chain 4, chloroplastic of Saccharum hybrid (Sugarcane).